The chain runs to 469 residues: UDP-N-acetylmuramate--L-alanine ligase (469 aa).

Position 113–119 (113–119 (GSHGKTT)) interacts with ATP.

The protein belongs to the MurCDEF family.

It localises to the cytoplasm. The catalysed reaction is UDP-N-acetyl-alpha-D-muramate + L-alanine + ATP = UDP-N-acetyl-alpha-D-muramoyl-L-alanine + ADP + phosphate + H(+). It functions in the pathway cell wall biogenesis; peptidoglycan biosynthesis. Its function is as follows. Cell wall formation. This is UDP-N-acetylmuramate--L-alanine ligase from Sorangium cellulosum (strain So ce56) (Polyangium cellulosum (strain So ce56)).